We begin with the raw amino-acid sequence, 371 residues long: N-methyl-L-tryptophan oxidase (371 aa).

D4 to A34 is a binding site for FAD. C307 is modified (S-8alpha-FAD cysteine).

It belongs to the MSOX/MTOX family. MTOX subfamily. In terms of assembly, monomer. FAD serves as cofactor.

The catalysed reaction is N(alpha)-methyl-L-tryptophan + O2 + H2O = L-tryptophan + formaldehyde + H2O2. Catalyzes the oxidative demethylation of N-methyl-L-tryptophan. The polypeptide is N-methyl-L-tryptophan oxidase (Yersinia pseudotuberculosis serotype O:1b (strain IP 31758)).